A 564-amino-acid polypeptide reads, in one-letter code: Potassium-transporting ATPase potassium-binding subunit (564 aa).

10 helical membrane passes run 4–24 (YDFALLLAFFVIVLLPAPWLG), 67–87 (TLALLAFNLVGFLLLFAVLLL), 135–155 (LGLTVQNFVSPATGLAVLVVL), 179–199 (LYGLLPLCLLLALLLVWQGVP), 258–278 (FEVASIILIPVALVFTFGHYV), 286–306 (AILACMLALFLIGGSTALWSE), 382–402 (AGLYGMLLFVLIAVFLAGLMI), 420–440 (LLVATLLVMPVGVLVLGAIAA), 487–507 (LMIGLAMLIGRFGYILPILAL), and 533–553 (GLLLVTILLVGGLTFLPTLAL).

Belongs to the KdpA family. In terms of assembly, the system is composed of three essential subunits: KdpA, KdpB and KdpC.

It localises to the cell inner membrane. Part of the high-affinity ATP-driven potassium transport (or Kdp) system, which catalyzes the hydrolysis of ATP coupled with the electrogenic transport of potassium into the cytoplasm. This subunit binds the periplasmic potassium ions and delivers the ions to the membrane domain of KdpB through an intramembrane tunnel. The polypeptide is Potassium-transporting ATPase potassium-binding subunit (Pseudomonas putida (strain ATCC 47054 / DSM 6125 / CFBP 8728 / NCIMB 11950 / KT2440)).